A 161-amino-acid chain; its full sequence is Small ribosomal subunit protein bS16 (161 aa).

A disordered region spans residues 114-161 (EGGPTTEATKPKKKSPAKKAKGGEGDADAAAEKVEASAEGEQTESAES). The span at 124 to 133 (PKKKSPAKKA) shows a compositional bias: basic residues.

It belongs to the bacterial ribosomal protein bS16 family.

The chain is Small ribosomal subunit protein bS16 from Mycobacterium marinum (strain ATCC BAA-535 / M).